A 552-amino-acid chain; its full sequence is CTP synthase (552 aa).

Residues Met-1–Leu-270 are amidoligase domain. CTP is bound at residue Ser-13. Ser-13 serves as a coordination point for UTP. ATP contacts are provided by residues Ser-14–Ile-19 and Asp-71. 2 residues coordinate Mg(2+): Asp-71 and Glu-144. CTP-binding positions include Asp-151–Glu-153, Lys-191–Gln-196, and Lys-227. Residues Lys-191–Gln-196 and Lys-227 each bind UTP. The 253-residue stretch at Thr-295 to Ala-547 folds into the Glutamine amidotransferase type-1 domain. Residue Gly-356 coordinates L-glutamine. Cys-383 functions as the Nucleophile; for glutamine hydrolysis in the catalytic mechanism. Residues Leu-384–Gln-387, Glu-407, and Arg-473 each bind L-glutamine. Active-site residues include His-520 and Glu-522.

This sequence belongs to the CTP synthase family. In terms of assembly, homotetramer.

The catalysed reaction is UTP + L-glutamine + ATP + H2O = CTP + L-glutamate + ADP + phosphate + 2 H(+). The enzyme catalyses L-glutamine + H2O = L-glutamate + NH4(+). It carries out the reaction UTP + NH4(+) + ATP = CTP + ADP + phosphate + 2 H(+). The protein operates within pyrimidine metabolism; CTP biosynthesis via de novo pathway; CTP from UDP: step 2/2. With respect to regulation, allosterically activated by GTP, when glutamine is the substrate; GTP has no effect on the reaction when ammonia is the substrate. The allosteric effector GTP functions by stabilizing the protein conformation that binds the tetrahedral intermediate(s) formed during glutamine hydrolysis. Inhibited by the product CTP, via allosteric rather than competitive inhibition. Its function is as follows. Catalyzes the ATP-dependent amination of UTP to CTP with either L-glutamine or ammonia as the source of nitrogen. Regulates intracellular CTP levels through interactions with the four ribonucleotide triphosphates. The sequence is that of CTP synthase from Burkholderia vietnamiensis (strain G4 / LMG 22486) (Burkholderia cepacia (strain R1808)).